The primary structure comprises 162 residues: uncharacterized protein (162 aa).

This is an uncharacterized protein from Methanocaldococcus jannaschii (strain ATCC 43067 / DSM 2661 / JAL-1 / JCM 10045 / NBRC 100440) (Methanococcus jannaschii).